Consider the following 385-residue polypeptide: MSWQQRIEAALVQRQHDDAYRVRQSNQGGSGRWLIQGDRCYLNFSSNDYLGLSHHPEIVRAWQQGAEQYGIGSGGSGHVTGYTDAHASLENQLADWLGYPRALLFISGYAANQAVVAALAQAEDRIFADKLSHASLLEAAAQSPATLRRFKHNQADSLQALLEKPTDGQTLVVTEGVFSMDGDTAPLPALQAQCRAHDAWLMVDDAHGIGVLGDEGRGSCWQQDIKPELLIVTFGKAFGVSGAAVLCTEPLAEYFLQFARHLIYSTSMPAAQACALSAAVNCVRQGGARRDALRRNIALFRAGFSNSSYQLMNSQSAIQPLIVGENARALALMNHLREQGVWVSAMRPPTVPPGSARLRITLTAEHQPEDINRLLTVLHHADRKL.

Position 21 (Arg21) interacts with substrate. 108–109 (GY) is a binding site for pyridoxal 5'-phosphate. Residue His133 coordinates substrate. Residues Ser179, His207, and Thr233 each coordinate pyridoxal 5'-phosphate. Lys236 carries the N6-(pyridoxal phosphate)lysine modification. Thr350 is a substrate binding site.

It belongs to the class-II pyridoxal-phosphate-dependent aminotransferase family. BioF subfamily. Homodimer. Requires pyridoxal 5'-phosphate as cofactor.

It catalyses the reaction 6-carboxyhexanoyl-[ACP] + L-alanine + H(+) = (8S)-8-amino-7-oxononanoate + holo-[ACP] + CO2. The protein operates within cofactor biosynthesis; biotin biosynthesis. Functionally, catalyzes the decarboxylative condensation of pimeloyl-[acyl-carrier protein] and L-alanine to produce 8-amino-7-oxononanoate (AON), [acyl-carrier protein], and carbon dioxide. The polypeptide is 8-amino-7-oxononanoate synthase (Pectobacterium atrosepticum (strain SCRI 1043 / ATCC BAA-672) (Erwinia carotovora subsp. atroseptica)).